The following is a 145-amino-acid chain: MLSVQPDTKPKGCAGCNRKIKDRYLLKALDKYWHEDCLKCACCDCRLGEVGSTLYTKANLILCRRDYLRLFGVTGNCAACSKLIPAFEMVMRAKDNVYHLDCFACQLCNQRFCVGDKFFLKNNMILCQTDYEEGLMKEGYAPQVR.

2 LIM zinc-binding domains span residues 11 to 73 (KGCA…LFGV) and 75 to 137 (GNCA…GLMK).

The protein is LIM domain only protein 3 (LMO3) of Bos taurus (Bovine).